The following is a 514-amino-acid chain: MEELQGYFKKARSLQQHFLYPLLLQEFIYTLAYDDGLKGSIFYEPIEFFGYDNKSSLVLIKRLITRMYQQNFLIYSVNDSNQNGLRGHINYFYSHFFYSHIVSEGFSVIVEIPFSLRLVSSPKEKEIPKSQNLRSIHSIFPFLEDKLSHLNNVSDILIPHPIHLEILVPILQYWIQDVPSLHLLRFFLHKYHNLNSFIQNNKTIYVFSKENKRLFWFLYNSYVSECEFLLVFLRKQSCYLRSTSSVAFLERSHFYGKMEHIIIVCCNNFQKTLWPFKDPFMHYVRYQGKAILASRGAHLLMKKWRYYLVNFWQYYFHFWSQPYRMHINPLLNYSFYFLGYLSSVLINPYAVKNKMLENSFLIDTVFKKFDTIIPIIPLIGSLSKAKFCTVSGHPISKPVWGDLSDFDIIDRFGRICRNLSHYHSGSSKKQSLYRIKYILRLSCARTLARKHKSTARALLQRLGSGLLEEFFTEEEQVLSFIFPKTTPFPLHGSHKERIWSLDIIRVNDLVNQII.

It belongs to the intron maturase 2 family. MatK subfamily.

The protein resides in the plastid. It localises to the chloroplast. Usually encoded in the trnK tRNA gene intron. Probably assists in splicing its own and other chloroplast group II introns. The protein is Maturase K of Erythronium grandiflorum (Yellow avalanche-lily).